The sequence spans 350 residues: tRNA uridine(34) hydroxylase (350 aa).

The 95-residue stretch at 146–240 (DDPDALFIDM…YARKAREQGL (95 aa)) folds into the Rhodanese domain. C200 (cysteine persulfide intermediate) is an active-site residue.

Belongs to the TrhO family.

The catalysed reaction is uridine(34) in tRNA + AH2 + O2 = 5-hydroxyuridine(34) in tRNA + A + H2O. Its function is as follows. Catalyzes oxygen-dependent 5-hydroxyuridine (ho5U) modification at position 34 in tRNAs, the first step in 5-carboxymethoxyuridine (cmo5U) biosynthesis. May be part of an alternate pathway, which is able to bypass cmo5U biogenesis in a subset of tRNAs under aerobic conditions. In Escherichia coli O157:H7, this protein is tRNA uridine(34) hydroxylase.